The chain runs to 894 residues: MTQLTVKALSEEIGTPVDRLMEQLADAGMNKASSDHVSDEEKQKLLSHLKKEHGDKSGESEPTRLTLQRKTRSTLSVAAGGGKSKDVQVEVRKKRTYVKRSTIEDDAKREAEEAAKREAEELAKREAEEQAKREAAEKAQREADEKAKREADAKREAEEKAKRAQADKAKKEMNAKNADANTQAKKEADELKRRQEEEAQRKAEQEAAKLVEEARKLAEENEARWSEEETKKKELENSDYHVTTSRYAREAEDAADRKEEGGARRKKKKPAKEEQSRGGRNQRGGKGRNKGKLAKPTSMQHGFDKSATVAKQDVVIGETIVLSELANKMSVKATEVIKVMMKMGAMATINQVIDQETAQLVAEEMGHKVVLRKENELEEAVLSDRDTNAEAVPRAPVVTIMGHVDHGKTSTLDYIRRTHVASGEAGGITQHIGAYHVETDNGMITFLDTPGHAAFTAMRARGAQATDIVVLVVAADDGVMPQTVEAIQHAKAAGVPLIVAVNKIDKEDANPDNVKNELAQYDVIPEEWGGENMFVHISAKQGTNIDGLLEAILLQSEVLELTAVAEGMASGVVVESRLDKGRGPVATVLVQSGTLNKGDIVLCGQEYGRVRAMRDELGKEITEAGPSIPVEILGLSGVPSSGDEATVVRDERKAREVANYRAGKFREVKLARQQKSKLENMFSNMTAGEVAELNVVLKADVQGSVEAIADSLLKLSTDEVKVSIVGSGVGGITETDAVLAEASNAIILGFNVRADASARRAIEAASVDLRYYSIIYQLIDEVKQAMGGMLAPEFKQEIIGLAEVRDVFKSPKLGAIAGCMVTEGLIKRNNPIRVLRDNVVIYEGELESLRRFKDDVQEVKNGYECGIGVKNYNDVRVGDQIEVFEIVEIKRTLD.

Residues 25–304 (ADAGMNKASS…KPTSMQHGFD (280 aa)) form a disordered region. Basic and acidic residues-rich tracts occupy residues 33-44 (SSDHVSDEEKQK), 52-62 (EHGDKSGESEP), 101-174 (STIE…KEMN), 184-239 (AKKE…ENSD), and 247-263 (YARE…EGGA). The span at 283–293 (RGGKGRNKGKL) shows a compositional bias: basic residues. Positions 393–562 (PRAPVVTIMG…LLQSEVLELT (170 aa)) constitute a tr-type G domain. The tract at residues 402–409 (GHVDHGKT) is G1. GTP is bound at residue 402 to 409 (GHVDHGKT). The G2 stretch occupies residues 427 to 431 (GITQH). A G3 region spans residues 448–451 (DTPG). GTP-binding positions include 448 to 452 (DTPGH) and 502 to 505 (NKID). The segment at 502–505 (NKID) is G4. A G5 region spans residues 538–540 (SAK).

This sequence belongs to the TRAFAC class translation factor GTPase superfamily. Classic translation factor GTPase family. IF-2 subfamily.

The protein resides in the cytoplasm. In terms of biological role, one of the essential components for the initiation of protein synthesis. Protects formylmethionyl-tRNA from spontaneous hydrolysis and promotes its binding to the 30S ribosomal subunits. Also involved in the hydrolysis of GTP during the formation of the 70S ribosomal complex. The sequence is that of Translation initiation factor IF-2 from Vibrio campbellii (strain ATCC BAA-1116).